The chain runs to 437 residues: Repulsive guidance molecule B (437 aa).

A signal peptide spans 1-45 (MGLRAAPSSAAAAAAEVEQRRSPGLCPPPLELLLLLLFSLGLLHA). Residue Asn120 is glycosylated (N-linked (GlcNAc...) asparagine). Residues 121-133 (CSKDGPTSSTNPE) show a composition bias toward polar residues. The disordered stretch occupies residues 121 to 153 (CSKDGPTSSTNPEVTHDPCNYHSHAGAREHRRG). 2 disulfides stabilise this stretch: Cys139-Cys226 and Cys163-Cys312. The N-linked (GlcNAc...) asparagine glycan is linked to Asn383. Asn413 is lipidated: GPI-anchor amidated asparagine. Residues 414–437 (GTPRGGSDLSVSLGLTCLILIVFL) constitute a propeptide, removed in mature form.

The protein belongs to the repulsive guidance molecule (RGM) family. As to quaternary structure, homooligomer. Interacts with DRGX. Interacts with BMP2 and BMP4. Interacts with the BMP type I receptors ACVR1, BMPR1A and BMPR1B and with the BMP type II receptor ACVR2B. The functional complex with its receptor NEO1/neogenin appears to be a heterotetramer with a 2:2 stoichiometry, RGM molecules acting as staples that bring two NEO1 receptors together without interacting themselves, this arrangement leads to activation of downstream signaling via RhoA. In terms of processing, GPI-anchored. Post-translationally, autocatalytically cleaved at low pH; the two chains remain linked via two disulfide bonds.

It localises to the cell membrane. The protein resides in the membrane raft. Member of the repulsive guidance molecule (RGM) family that contributes to the patterning of the developing nervous system. Acts as a bone morphogenetic protein (BMP) coreceptor that potentiates BMP signaling. Promotes neuronal adhesion. May inhibit neurite outgrowth. The chain is Repulsive guidance molecule B from Homo sapiens (Human).